The following is a 569-amino-acid chain: Isocitrate dehydrogenase kinase/phosphatase (569 aa).

ATP contacts are provided by residues 316 to 322 (APGVRGM) and K337. D372 is a catalytic residue.

The protein belongs to the AceK family.

Its subcellular location is the cytoplasm. The enzyme catalyses L-seryl-[isocitrate dehydrogenase] + ATP = O-phospho-L-seryl-[isocitrate dehydrogenase] + ADP + H(+). Bifunctional enzyme which can phosphorylate or dephosphorylate isocitrate dehydrogenase (IDH) on a specific serine residue. This is a regulatory mechanism which enables bacteria to bypass the Krebs cycle via the glyoxylate shunt in response to the source of carbon. When bacteria are grown on glucose, IDH is fully active and unphosphorylated, but when grown on acetate or ethanol, the activity of IDH declines drastically concomitant with its phosphorylation. This chain is Isocitrate dehydrogenase kinase/phosphatase, found in Pseudomonas putida (strain W619).